A 30-amino-acid polypeptide reads, in one-letter code: Cyclotide cter-H (30 aa).

The cyclopeptide (Gly-Asp) cross-link spans 1 to 30 (GLPCGESCVFIPCITTVVGCSCKNKVCYND). 3 disulfides stabilise this stretch: Cys4–Cys20, Cys8–Cys22, and Cys13–Cys27.

Contains 3 disulfide bonds. In terms of processing, this is a cyclic peptide.

Functionally, probably participates in a plant defense mechanism. The polypeptide is Cyclotide cter-H (Clitoria ternatea (Butterfly pea)).